Here is a 293-residue protein sequence, read N- to C-terminus: Ribosomal protein L11 methyltransferase (293 aa).

Residues Thr145, Gly166, Asp188, and Asn230 each contribute to the S-adenosyl-L-methionine site.

Belongs to the methyltransferase superfamily. PrmA family.

It localises to the cytoplasm. The enzyme catalyses L-lysyl-[protein] + 3 S-adenosyl-L-methionine = N(6),N(6),N(6)-trimethyl-L-lysyl-[protein] + 3 S-adenosyl-L-homocysteine + 3 H(+). Its function is as follows. Methylates ribosomal protein L11. This is Ribosomal protein L11 methyltransferase from Haemophilus ducreyi (strain 35000HP / ATCC 700724).